Reading from the N-terminus, the 227-residue chain is tRNA (guanine-N(1)-)-methyltransferase (227 aa).

S-adenosyl-L-methionine is bound by residues Gly-110 and 129 to 134; that span reads IGDYVL.

The protein belongs to the RNA methyltransferase TrmD family. In terms of assembly, homodimer.

The protein localises to the cytoplasm. It carries out the reaction guanosine(37) in tRNA + S-adenosyl-L-methionine = N(1)-methylguanosine(37) in tRNA + S-adenosyl-L-homocysteine + H(+). Specifically methylates guanosine-37 in various tRNAs. The sequence is that of tRNA (guanine-N(1)-)-methyltransferase from Mycoplasmopsis synoviae (strain 53) (Mycoplasma synoviae).